The primary structure comprises 305 residues: Homeobox protein NANOGP8 (305 aa).

A disordered region spans residues 1–96 (MSVDPACPQS…KEDKVPVKKQ (96 aa)). Residues 65–82 (SPDSSTSPKGKQPTSAEN) show a composition bias toward polar residues. The segment at residues 95–154 (KQKTRTVFSSTQLCVLNDRFQRQKYLSLQQMQELSNILNLSYKQVKTWFQNQRMKSKRWQ) is a DNA-binding region (homeobox). Tandem repeats lie at residues 196–200 (WSNQT), 201–205 (WNNST), 206–210 (WSNQT), 216–220 (WSNHS), 221–225 (WNTQT), 226–230 (WCTQS), 231–235 (WNNQA), and 236–240 (WNSPF). The segment at 196-240 (WSNQTWNNSTWSNQTQNIQSWSNHSWNTQTWCTQSWNNQAWNSPF) is 8 X repeats starting with a Trp in each unit. The interval 196-240 (WSNQTWNNSTWSNQTQNIQSWSNHSWNTQTWCTQSWNNQAWNSPF) is sufficient for transactivation activity. The segment at 241–305 (YNCGEESLQS…YSMNMQPEDV (65 aa)) is sufficient for strong transactivation activity.

The protein belongs to the Nanog homeobox family.

The protein localises to the nucleus. Functionally, may act as a transcription regulator. When overexpressed, promotes entry of cells into S phase and cell proliferation. In Homo sapiens (Human), this protein is Homeobox protein NANOGP8 (NANOGP8).